A 350-amino-acid chain; its full sequence is Twinfilin-1 (350 aa).

An N-acetylserine modification is found at Ser-2. One can recognise an ADF-H 1 domain in the interval 2–139; that stretch reads SHRTGIQASE…SLHGYKKYLL (138 aa). Ser-143 and Ser-277 each carry phosphoserine. The region spanning 175 to 313 is the ADF-H 2 domain; that stretch reads LQGVAFPISR…TADFLYEEVH (139 aa). Tyr-309 carries the post-translational modification Phosphotyrosine. A disordered region spans residues 316 to 350; sequence QHAHKQSFAKPKGPAGKRGIRRLIRGPAETEATTD. The residue at position 349 (Thr-349) is a Phosphothreonine.

It belongs to the actin-binding proteins ADF family. Twinfilin subfamily. In terms of assembly, interacts with G-actin; ADP-actin form and capping protein (CP). May also be able to interact with TWF2 and phosphoinositides, PI(4,5)P2. When bound to PI(4,5)P2, it is down-regulated. Interacts with ACTG1. Post-translationally, phosphorylated on serine and threonine residues.

The protein resides in the cytoplasm. Its subcellular location is the cytoskeleton. Functionally, actin-binding protein involved in motile and morphological processes. Inhibits actin polymerization, likely by sequestering G-actin. By capping the barbed ends of filaments, it also regulates motility. Seems to play an important role in clathrin-mediated endocytosis and distribution of endocytic organelles. The chain is Twinfilin-1 (TWF1) from Pongo abelii (Sumatran orangutan).